A 255-amino-acid chain; its full sequence is 5'-nucleotidase SurE (255 aa).

4 residues coordinate a divalent metal cation: aspartate 8, aspartate 9, serine 40, and asparagine 92.

It belongs to the SurE nucleotidase family. The cofactor is a divalent metal cation.

The protein localises to the cytoplasm. It carries out the reaction a ribonucleoside 5'-phosphate + H2O = a ribonucleoside + phosphate. In terms of biological role, nucleotidase that shows phosphatase activity on nucleoside 5'-monophosphates. The chain is 5'-nucleotidase SurE from Brucella abortus (strain S19).